The chain runs to 1358 residues: DNA-directed RNA polymerase subunit beta (1358 aa).

This sequence belongs to the RNA polymerase beta chain family. In terms of assembly, the RNAP catalytic core consists of 2 alpha, 1 beta, 1 beta' and 1 omega subunit. When a sigma factor is associated with the core the holoenzyme is formed, which can initiate transcription.

It catalyses the reaction RNA(n) + a ribonucleoside 5'-triphosphate = RNA(n+1) + diphosphate. Its function is as follows. DNA-dependent RNA polymerase catalyzes the transcription of DNA into RNA using the four ribonucleoside triphosphates as substrates. The polypeptide is DNA-directed RNA polymerase subunit beta (Francisella tularensis subsp. holarctica (strain OSU18)).